The primary structure comprises 501 residues: Aromatase 3 (501 aa).

Cys435 provides a ligand contact to heme.

Belongs to the cytochrome P450 family. The cofactor is heme. As to expression, ovary.

It localises to the membrane. It carries out the reaction testosterone + 3 reduced [NADPH--hemoprotein reductase] + 3 O2 = 17beta-estradiol + formate + 3 oxidized [NADPH--hemoprotein reductase] + 4 H2O + 4 H(+). It catalyses the reaction androst-4-ene-3,17-dione + 3 reduced [NADPH--hemoprotein reductase] + 3 O2 = estrone + formate + 3 oxidized [NADPH--hemoprotein reductase] + 4 H2O + 4 H(+). Catalyzes the formation of aromatic C18 estrogens from C19 androgens. This Sus scrofa (Pig) protein is Aromatase 3 (CYP19A3).